The primary structure comprises 285 residues: Nucleotide-binding protein Pmen_0867 (285 aa).

Glycine 8–serine 15 contacts ATP. Aspartate 60 to asparagine 63 serves as a coordination point for GTP.

This sequence belongs to the RapZ-like family.

Functionally, displays ATPase and GTPase activities. This chain is Nucleotide-binding protein Pmen_0867, found in Ectopseudomonas mendocina (strain ymp) (Pseudomonas mendocina).